Consider the following 525-residue polypeptide: Endoglucanase 10 (525 aa).

The N-terminal stretch at 1–26 (MEEKSKSRGWCGWFIAIIVLASVILA) is a signal peptide. Asp109 acts as the Nucleophile in catalysis. A glycan (N-linked (GlcNAc...) asparagine) is linked at Asn259. The active site involves His442. Residues Asn464 and Asn484 are each glycosylated (N-linked (GlcNAc...) asparagine). Residues Asp489 and Glu498 contribute to the active site.

It belongs to the glycosyl hydrolase 9 (cellulase E) family.

It localises to the secreted. The enzyme catalyses Endohydrolysis of (1-&gt;4)-beta-D-glucosidic linkages in cellulose, lichenin and cereal beta-D-glucans.. The sequence is that of Endoglucanase 10 from Arabidopsis thaliana (Mouse-ear cress).